We begin with the raw amino-acid sequence, 404 residues long: Propionate kinase (404 aa).

This sequence belongs to the acetokinase family. PduW subfamily.

Its subcellular location is the cytoplasm. It carries out the reaction propanoate + ATP = propanoyl phosphate + ADP. The protein operates within polyol metabolism; 1,2-propanediol degradation. Its function is as follows. Works with phosphate acetyltransferase (pta) to capture exogenous propionate and regenerate propionyl-CoA during degradation of 1,2-propanediol (1,2-PD). This chain is Propionate kinase, found in Klebsiella pneumoniae subsp. pneumoniae (strain ATCC 700721 / MGH 78578).